We begin with the raw amino-acid sequence, 588 residues long: Calicin (588 aa).

Residues S12–L124 enclose the BTB domain. Positions C133–F235 constitute a BACK domain. S149 bears the Phosphoserine mark. Kelch repeat units follow at residues S280 to R327, Y328 to G375, V377 to D423, H425 to Q475, D476 to S525, and K526 to L580.

In terms of assembly, interacts with CYLC1; the interaction may be relevant for proper acrosome attachment to the nuclear envelope. As to expression, expressed in testis, in spermatozoa (at protein level).

It localises to the cytoplasm. Its subcellular location is the cytoskeleton. The protein resides in the perinuclear theca. It is found in the calyx. Functionally, required for both nuclear and acrosomal shaping during spermiogenesis. The sequence is that of Calicin (CCIN) from Homo sapiens (Human).